The chain runs to 154 residues: RNA-binding protein PAB1135 (154 aa).

In terms of assembly, homodimer in solution.

Functionally, in vitro, binds efficiently double-stranded RNAs in a non-sequence specific manner. The sequence is that of RNA-binding protein PAB1135 from Pyrococcus abyssi (strain GE5 / Orsay).